The following is a 629-amino-acid chain: 1-deoxy-D-xylulose-5-phosphate synthase (629 aa).

Thiamine diphosphate is bound by residues His85 and 126–128; that span reads GHS. Residue Asp157 coordinates Mg(2+). Thiamine diphosphate-binding positions include 158–159, Asn186, Tyr293, and Glu373; that span reads GS. Asn186 contributes to the Mg(2+) binding site.

The protein belongs to the transketolase family. DXPS subfamily. As to quaternary structure, homodimer. Mg(2+) serves as cofactor. Thiamine diphosphate is required as a cofactor.

The catalysed reaction is D-glyceraldehyde 3-phosphate + pyruvate + H(+) = 1-deoxy-D-xylulose 5-phosphate + CO2. Its pathway is metabolic intermediate biosynthesis; 1-deoxy-D-xylulose 5-phosphate biosynthesis; 1-deoxy-D-xylulose 5-phosphate from D-glyceraldehyde 3-phosphate and pyruvate: step 1/1. Its function is as follows. Catalyzes the acyloin condensation reaction between C atoms 2 and 3 of pyruvate and glyceraldehyde 3-phosphate to yield 1-deoxy-D-xylulose-5-phosphate (DXP). The polypeptide is 1-deoxy-D-xylulose-5-phosphate synthase (Helicobacter hepaticus (strain ATCC 51449 / 3B1)).